Reading from the N-terminus, the 135-residue chain is Hemoglobin subunit alpha (135 aa).

Residues 1–135 (AAVVALWGKI…VALALAERYK (135 aa)) enclose the Globin domain. His-52 provides a ligand contact to O2. His-81 contacts heme b.

It belongs to the globin family. As to quaternary structure, hb1 is a heterotetramer of two alpha chains and two beta-1 chains. Hb2 is a heterotetramer of two alpha chains and two beta-2 chains. Post-translationally, the N-terminus is blocked. In terms of tissue distribution, red blood cells.

In terms of biological role, involved in oxygen transport from gills to the various peripheral tissues. This chain is Hemoglobin subunit alpha, found in Dissostichus eleginoides (Patagonian toothfish).